Consider the following 431-residue polypeptide: Enolase (431 aa).

Gln167 contributes to the (2R)-2-phosphoglycerate binding site. The Proton donor role is filled by Glu209. Residues Asp246, Glu290, and Asp317 each contribute to the Mg(2+) site. Residues Lys342, Arg371, Ser372, and Lys393 each contribute to the (2R)-2-phosphoglycerate site. Lys342 acts as the Proton acceptor in catalysis.

The protein belongs to the enolase family. Component of the RNA degradosome, a multiprotein complex involved in RNA processing and mRNA degradation. Mg(2+) serves as cofactor.

It localises to the cytoplasm. The protein localises to the secreted. The protein resides in the cell surface. The catalysed reaction is (2R)-2-phosphoglycerate = phosphoenolpyruvate + H2O. It participates in carbohydrate degradation; glycolysis; pyruvate from D-glyceraldehyde 3-phosphate: step 4/5. Catalyzes the reversible conversion of 2-phosphoglycerate (2-PG) into phosphoenolpyruvate (PEP). It is essential for the degradation of carbohydrates via glycolysis. This chain is Enolase, found in Yersinia enterocolitica serotype O:8 / biotype 1B (strain NCTC 13174 / 8081).